Here is a 365-residue protein sequence, read N- to C-terminus: 2-aminoethylphosphonate--pyruvate transaminase (365 aa).

Residue Lys194 is modified to N6-(pyridoxal phosphate)lysine.

It belongs to the class-V pyridoxal-phosphate-dependent aminotransferase family. PhnW subfamily. Homodimer. Pyridoxal 5'-phosphate serves as cofactor.

It carries out the reaction (2-aminoethyl)phosphonate + pyruvate = phosphonoacetaldehyde + L-alanine. Involved in phosphonate degradation. This is 2-aminoethylphosphonate--pyruvate transaminase from Bacillus mycoides (strain KBAB4) (Bacillus weihenstephanensis).